Consider the following 266-residue polypeptide: MMSWLTIGVILGLVQGITEFLPVSSTGHLIIVAKFLHFTGSKASVFEVAVQLGSIMAVVVIYWNRFIGLIRPEKNKKFTGLYGIWLLFLTTLPPGIIGFLFHSYIKTLFTIPSVIAALTTGSIFMLISEQLCRNISQRIVTLDELTPKTALGIGFFECLALWPGFSRSAATIMGGMLLGAKRHLAAEYSFIAAVPVMFAATGYDLLKNWDLFTANDLPLFITGMICAFLAAWITIKVFILLISKISLRPFAYYRLLLAFIVYLCIK.

8 consecutive transmembrane segments (helical) span residues 1 to 21 (MMSW…TEFL), 43 to 63 (ASVF…VIYW), 81 to 101 (LYGI…GFLF), 107 to 127 (TLFT…FMLI), 145 to 165 (LTPK…WPGF), 183 to 203 (HLAA…ATGY), 219 to 239 (LFIT…KVFI), and 245 to 265 (ISLR…YLCI).

The protein belongs to the UppP family.

The protein localises to the cell membrane. It catalyses the reaction di-trans,octa-cis-undecaprenyl diphosphate + H2O = di-trans,octa-cis-undecaprenyl phosphate + phosphate + H(+). Catalyzes the dephosphorylation of undecaprenyl diphosphate (UPP). Confers resistance to bacitracin. This chain is Undecaprenyl-diphosphatase, found in Lawsonia intracellularis (strain PHE/MN1-00).